The primary structure comprises 550 residues: ATP-dependent RNA helicase dbp2 (550 aa).

The tract at residues 1–25 (MSYRDNEYSGNYNGKEDGYNSRGRY) is disordered. The short motif at 122-150 (TTFEEAGFPNYVLKEVKQLGFEAPTPIQQ) is the Q motif element. The Helicase ATP-binding domain maps to 153–328 (WPMAMSGRDM…RDYLNDYIQV (176 aa)). Residue 166-173 (SATGSGKT) participates in ATP binding. The DEAD box motif lies at 276–279 (DEAD). In terms of domain architecture, Helicase C-terminal spans 340–503 (NIKQIVEVVD…DIDPKLEEMA (164 aa)). An RNA-binding RGG-box region spans residues 510 to 533 (RGGNYRRGGYGRGGFRRGGGYGNR). The tract at residues 525-550 (RRGGGYGNRNRGFTGSNSAPLARSRW) is disordered.

The protein belongs to the DEAD box helicase family. DDX5/DBP2 subfamily. Associates with polysomes.

It is found in the cytoplasm. The protein resides in the nucleus. The enzyme catalyses ATP + H2O = ADP + phosphate + H(+). Its function is as follows. ATP-dependent RNA helicase involved nonsense-mediated mRNA decay and ribosome biogenesis through rRNA processing. In Schizosaccharomyces pombe (strain 972 / ATCC 24843) (Fission yeast), this protein is ATP-dependent RNA helicase dbp2 (dbp2).